The sequence spans 230 residues: Probable endonuclease C19F8.04c (230 aa).

The helical transmembrane segment at 10–27 (AIIGTGLITTSIGGFFFL) threads the bilayer. Residues 55-216 (KTMFGYVTRV…KKKKLSLWSQ (162 aa)) enclose the TNase-like domain. Arg-104 is a catalytic residue. Residue Asp-109 coordinates Ca(2+). Residues Glu-112 and Arg-152 contribute to the active site.

It belongs to the LCL3 family.

The protein localises to the mitochondrion. It is found in the membrane. The protein is Probable endonuclease C19F8.04c of Schizosaccharomyces pombe (strain 972 / ATCC 24843) (Fission yeast).